The following is a 363-amino-acid chain: Protein-arginine kinase (363 aa).

Residues 24–255 (IVLSSRIRLA…QQLIAQERAA (232 aa)) form the Phosphagen kinase C-terminal domain. ATP contacts are provided by residues 27-31 (SSRIR), His-92, Arg-126, 177-181 (RASVM), and 208-213 (RGTYGE). Residues 338-343 (RDVRRA) carry the RDXXRA motif of the pArg binding pocket involved in allosteric regulation motif.

It belongs to the ATP:guanido phosphotransferase family.

It carries out the reaction L-arginyl-[protein] + ATP = N(omega)-phospho-L-arginyl-[protein] + ADP + H(+). Appears to be allosterically activated by the binding of pArg-containing polypeptides to the pArg-binding pocket localized in the C-terminal domain of McsB. Its function is as follows. Catalyzes the specific phosphorylation of arginine residues in a large number of proteins. Is part of the bacterial stress response system. Protein arginine phosphorylation has a physiologically important role and is involved in the regulation of many critical cellular processes, such as protein homeostasis, motility, competence, and stringent and stress responses, by regulating gene expression and protein activity. The protein is Protein-arginine kinase of Geobacillus kaustophilus (strain HTA426).